Here is a 2207-residue protein sequence, read N- to C-terminus: DNA polymerase epsilon catalytic subunit A (2207 aa).

Disordered stretches follow at residues 1–20 (MPSR…AASF), 1201–1233 (SMEK…PFAS), and 1934–1961 (RPES…ENEE). The Zn(2+) site is built by cysteine 2075, cysteine 2078, cysteine 2113, and cysteine 2116. Residues 2075–2116 (CSACCLIRDLDLCRDEDVLPERGSGSGPDSATSSRPWCCPFC) form a CysA-type zinc finger. [4Fe-4S] cluster is bound by residues cysteine 2147, cysteine 2150, cysteine 2162, and cysteine 2164. A CysB motif motif is present at residues 2147-2164 (CSKCGTLKISEFMEHCSC).

The protein belongs to the DNA polymerase type-B family. In terms of assembly, heterotetramer. Consists of 4 subunits: pol2, dpb2, dpb3 and dpb4. Requires [4Fe-4S] cluster as cofactor.

The protein localises to the nucleus. The catalysed reaction is DNA(n) + a 2'-deoxyribonucleoside 5'-triphosphate = DNA(n+1) + diphosphate. Functionally, DNA polymerase II participates in chromosomal DNA replication. The protein is DNA polymerase epsilon catalytic subunit A (pol2) of Emericella nidulans (strain FGSC A4 / ATCC 38163 / CBS 112.46 / NRRL 194 / M139) (Aspergillus nidulans).